We begin with the raw amino-acid sequence, 530 residues long: 5-aminolevulinate synthase, mitochondrial (530 aa).

A mitochondrion-targeting transit peptide spans 1–26; the sequence is MFRPVLKVRPSFSYPYSIVSSRSVRL. Positions 73, 186, and 205 each coordinate substrate. Residues Ser-238, His-266, and Thr-316 each coordinate pyridoxal 5'-phosphate. Lys-319 is an active-site residue. At Lys-319 the chain carries N6-(pyridoxal phosphate)lysine. The pyridoxal 5'-phosphate site is built by Thr-348 and Thr-349. Thr-434 contacts substrate.

This sequence belongs to the class-II pyridoxal-phosphate-dependent aminotransferase family. In terms of assembly, homodimer. Requires pyridoxal 5'-phosphate as cofactor.

It localises to the mitochondrion matrix. It carries out the reaction succinyl-CoA + glycine + H(+) = 5-aminolevulinate + CO2 + CoA. The protein operates within porphyrin-containing compound metabolism; protoporphyrin-IX biosynthesis; 5-aminolevulinate from glycine: step 1/1. Its function is as follows. Catalyzes the synthesis of 5-aminolevulinate (ALA) from succinyl-CoA and glycine, the first and rate-limiting step in heme biosynthesis. In Candida glabrata (strain ATCC 2001 / BCRC 20586 / JCM 3761 / NBRC 0622 / NRRL Y-65 / CBS 138) (Yeast), this protein is 5-aminolevulinate synthase, mitochondrial (HEM1).